We begin with the raw amino-acid sequence, 377 residues long: Putative holocytochrome-c synthase (377 aa).

Disordered regions lie at residues 1–29 and 111–136; these read MTSS…SNEA and QNSE…KPAG. Positions 7–22 are enriched in basic and acidic residues; it reads TTDHPRTGKCPIDHSK. HRM repeat units follow at residues 114-119 and 124-129; these read EATPAV and TCPMSN.

It belongs to the cytochrome c-type heme lyase family.

It localises to the mitochondrion inner membrane. The protein localises to the mitochondrion intermembrane space. The catalysed reaction is holo-[cytochrome c] = apo-[cytochrome c] + heme b. In terms of biological role, lyase that catalyzes the covalent linking of the heme group to the cytochrome C apoprotein to produce the mature functional cytochrome. This Schizosaccharomyces pombe (strain 972 / ATCC 24843) (Fission yeast) protein is Putative holocytochrome-c synthase.